The chain runs to 343 residues: Tetraacyldisaccharide 4'-kinase (343 aa).

53-60 (TCGGAGKT) is an ATP binding site.

This sequence belongs to the LpxK family.

It catalyses the reaction a lipid A disaccharide + ATP = a lipid IVA + ADP + H(+). It participates in glycolipid biosynthesis; lipid IV(A) biosynthesis; lipid IV(A) from (3R)-3-hydroxytetradecanoyl-[acyl-carrier-protein] and UDP-N-acetyl-alpha-D-glucosamine: step 6/6. Transfers the gamma-phosphate of ATP to the 4'-position of a tetraacyldisaccharide 1-phosphate intermediate (termed DS-1-P) to form tetraacyldisaccharide 1,4'-bis-phosphate (lipid IVA). This chain is Tetraacyldisaccharide 4'-kinase, found in Bartonella quintana (strain Toulouse) (Rochalimaea quintana).